A 161-amino-acid chain; its full sequence is MENLTEDMKTWFEIYMLQNRYIGHLDNDRLERWPEMFTEDCTYEIVPKENADLGLPVGIVHCTNQRMLRDRVVSLRHANIYEEHTYRHMTSGLAIVAQRDGEIDTESNYVVVQTRSNGESNVYQAGKYYDTVVRTPDGLRYKAKRVIYDTSRVQTLLATPI.

The protein belongs to the bacterial ring-hydroxylating dioxygenase beta subunit family. As to quaternary structure, part of a multicomponent enzyme system composed of a reductase (AndAa), a ferredoxin (AndAb) and a two-subunit oxygenase component (AndAc and AndAd).

The enzyme catalyses anthranilate + NADH + O2 + 3 H(+) = catechol + NH4(+) + CO2 + NAD(+). It carries out the reaction anthranilate + NADPH + O2 + 3 H(+) = catechol + NH4(+) + CO2 + NADP(+). The protein operates within aromatic compound metabolism; anthranilate degradation via hydroxylation; catechol from anthranilate: step 1/1. In terms of biological role, oxygenase component of anthranilate dioxygenase multicomponent enzyme system which catalyzes the incorporation of both atoms of molecular oxygen into anthranilate to form catechol. Can also act on benzoate and salicylate but not on 2-chlorobenzoate or o-toluate. The polypeptide is Anthranilate 1,2-dioxygenase small subunit (Burkholderia cepacia (Pseudomonas cepacia)).